Consider the following 226-residue polypeptide: Charged multivesicular body protein 4 (226 aa).

The stretch at 22-88 (IQKLRETENM…DGTLSTIEMQ (67 aa)) forms a coiled coil. A disordered region spans residues 169–226 (QENFDKEIIGIPEPTPTLPEAPTEDLPEKAKEKKKATTTTAVEDDDDPDMKQLLSWSN).

This sequence belongs to the SNF7 family. In terms of assembly, homopolymer; forms elongated striated filaments of uniform ~10nm width. Monomers interact in a staggered arrangement mediated by complementary charged electrostatic surfaces. Interacts with l(2)gd1 (via DM14 domains 1 and 3); the interaction is direct and blocks access to the surface involved in homopolymerization. This interaction may be required for the ESCRT-III complex role in multivesicular body formation. In terms of tissue distribution, expressed at considerably higher levels in testis than in ovary. Expressed in midgut, eye, mouthparts and male accessory gland.

It is found in the endosome. It localises to the multivesicular body. Its subcellular location is the midbody. Its activity is regulated as follows. May be regulated by aurB/Aurora kinase B-dependent phosphorylation. Its function is as follows. Probable core polymerisation component of the endosomal sorting required for transport (ESCRT) III complex involved in multiple cellular processes requiring the outward bending of membranes, including vesicle budding, membrane repair and cytokinesis. The ESCRT pathway involves 4 complexes (ESCRT-0, -I, -II and -III) that sequentially assemble on the cytoplasmic side of membranes and induce membrane remodeling, budding and scission. As part of the ESCRT-III complex, involved in the budding of intraluminal vesicles (ILVs) into endosomes to form multivesicular bodies (MVBs), which target their contents for degradation via the endolysosomal pathway. Involved in regulation of signal transduction pathways, including the Notch and BMP/decapentaplegic (dpp) pathways, by sequestering the intracellular domains of activated receptors into ILVs, isolating them from the cytoplasm and targeting them for lysosomal degradation. Involved in targeting ubiquitilated proteins, such as mono-ubiquitilanated N/Notch, to MVBs for degradation. Plays a role in wing development by regulating Notch signaling. Involved in abscission of germline cells during oogenesis. Involved in spermiogenesis. Required for efficient cytoplasmic isolation and abscission during cytokinesis of epithelial sensory organ precursor cells. May be involved in septate junction remodeling and maintenance. This Drosophila melanogaster (Fruit fly) protein is Charged multivesicular body protein 4.